Reading from the N-terminus, the 1296-residue chain is Probable serine/threonine protein kinase IREH1 (1296 aa).

Disordered regions lie at residues methionine 1–proline 274, serine 457–histidine 480, and serine 524–arginine 553. The segment covering serine 10–serine 32 has biased composition (low complexity). Serine 32 carries the post-translational modification Phosphoserine. 3 stretches are compositionally biased toward basic and acidic residues: residues aspartate 68–serine 77, glutamate 101–glutamate 112, and arginine 178–leucine 208. The span at proline 214–glycine 249 shows a compositional bias: low complexity. A C2H2-type; atypical zinc finger spans residues cysteine 602 to cysteine 621. Residues phenylalanine 724–arginine 750 are disordered. Polar residues predominate over residues glutamine 730–methionine 740. In terms of domain architecture, Protein kinase spans phenylalanine 882 to phenylalanine 1171. Residues isoleucine 888–valine 896 and lysine 911 each bind ATP. Residue aspartate 1005 is the Proton acceptor of the active site. Serine 1070 is modified (phosphoserine). Positions lysine 1172–asparagine 1277 constitute an AGC-kinase C-terminal domain. Residues proline 1214–glutamate 1245 are disordered. Over residues aspartate 1225 to serine 1235 the composition is skewed to polar residues. The span at asparagine 1236–glutamate 1245 shows a compositional bias: basic and acidic residues.

The protein belongs to the protein kinase superfamily. AGC Ser/Thr protein kinase family.

It catalyses the reaction L-seryl-[protein] + ATP = O-phospho-L-seryl-[protein] + ADP + H(+). The enzyme catalyses L-threonyl-[protein] + ATP = O-phospho-L-threonyl-[protein] + ADP + H(+). Its function is as follows. May be involved in root hair elongation. The chain is Probable serine/threonine protein kinase IREH1 from Arabidopsis thaliana (Mouse-ear cress).